Reading from the N-terminus, the 213-residue chain is MRTRIKICGLTREADVDAAVEAGVDAVGFVFYAKSPRAVSVAHAAALARRLPPFVTPVGLFVNAAPHELAAACAAIPTLMLQFHGDETPAQCDAVGRPYLRAARMTPGFDLLNFAQQFSSAQALLLDAYVEGYGGGGKVFDWSLVPSGVTPPLVLSGGLSAANVTDGVLKVRPWAVDVSSGVESAKGIKDADAVRRFCEAVREADARVAASEI.

It belongs to the TrpF family.

It catalyses the reaction N-(5-phospho-beta-D-ribosyl)anthranilate = 1-(2-carboxyphenylamino)-1-deoxy-D-ribulose 5-phosphate. It participates in amino-acid biosynthesis; L-tryptophan biosynthesis; L-tryptophan from chorismate: step 3/5. The polypeptide is N-(5'-phosphoribosyl)anthranilate isomerase (Methylibium petroleiphilum (strain ATCC BAA-1232 / LMG 22953 / PM1)).